The chain runs to 188 residues: Ribosomal RNA small subunit methyltransferase G (188 aa).

S-adenosyl-L-methionine contacts are provided by residues Gly69, Phe74, 119 to 120 (VQ), and Arg134.

This sequence belongs to the methyltransferase superfamily. RNA methyltransferase RsmG family.

It is found in the cytoplasm. It catalyses the reaction guanosine(527) in 16S rRNA + S-adenosyl-L-methionine = N(7)-methylguanosine(527) in 16S rRNA + S-adenosyl-L-homocysteine. Its function is as follows. Specifically methylates the N7 position of guanine in position 527 of 16S rRNA. This Campylobacter jejuni subsp. doylei (strain ATCC BAA-1458 / RM4099 / 269.97) protein is Ribosomal RNA small subunit methyltransferase G.